The following is a 125-amino-acid chain: Ribosome-binding factor A (125 aa).

This sequence belongs to the RbfA family. In terms of assembly, monomer. Binds 30S ribosomal subunits, but not 50S ribosomal subunits or 70S ribosomes.

Its subcellular location is the cytoplasm. Functionally, one of several proteins that assist in the late maturation steps of the functional core of the 30S ribosomal subunit. Associates with free 30S ribosomal subunits (but not with 30S subunits that are part of 70S ribosomes or polysomes). Required for efficient processing of 16S rRNA. May interact with the 5'-terminal helix region of 16S rRNA. The polypeptide is Ribosome-binding factor A (Carboxydothermus hydrogenoformans (strain ATCC BAA-161 / DSM 6008 / Z-2901)).